Consider the following 143-residue polypeptide: 3-hydroxyacyl-[acyl-carrier-protein] dehydratase FabZ (143 aa).

His47 is an active-site residue.

It belongs to the thioester dehydratase family. FabZ subfamily.

The protein resides in the cytoplasm. It carries out the reaction a (3R)-hydroxyacyl-[ACP] = a (2E)-enoyl-[ACP] + H2O. In terms of biological role, involved in unsaturated fatty acids biosynthesis. Catalyzes the dehydration of short chain beta-hydroxyacyl-ACPs and long chain saturated and unsaturated beta-hydroxyacyl-ACPs. The polypeptide is 3-hydroxyacyl-[acyl-carrier-protein] dehydratase FabZ (Moorella thermoacetica (strain ATCC 39073 / JCM 9320)).